A 189-amino-acid polypeptide reads, in one-letter code: MATMLLLLATLAGLFTTTEGQSFHLGKCPSPPVQENFDVKKYLGRWYEIEKIPVSFEKGNCIQANYSLMENGNIKVLNKELRPDGTLNQVEGEAKQSNMSEPAKLEVQFFSLMPPAPYWILATDYESYALVYSCTTFFWFFHVDYVWILGRNPYLPPETITYLKYILTSNDIDIAKITTKDQANCPDFL.

The first 20 residues, 1-20 (MATMLLLLATLAGLFTTTEG), serve as a signal peptide directing secretion. The residue at position 21 (glutamine 21) is a Pyrrolidone carboxylic acid. Disulfide bonds link cysteine 28-cysteine 134 and cysteine 61-cysteine 185. Residues asparagine 65 and asparagine 98 are each glycosylated (N-linked (GlcNAc...) asparagine).

It belongs to the calycin superfamily. Lipocalin family. In terms of assembly, homodimer. In terms of tissue distribution, expressed in liver, kidney, bladder, adrenal, cerebrum, duodenum, testis, lung, spleen, pancreas, heart and skin.

It is found in the secreted. Functionally, APOD occurs in the macromolecular complex with lecithin-transport and binding of bilin. Appears to be able to transport a variety of ligands in a number of different contexts. The sequence is that of Apolipoprotein D (Apod) from Rattus norvegicus (Rat).